The following is a 348-amino-acid chain: MNGTEGPNFYVPFSNKTGVVRSPFEFPQYYLAEPWQFSMLAAYMFLLIVLGFPINFLTLYVTVQHKKLRTPLNYILLNLAVADLFMVFGGFTTTLYTSLHGYFVFGPTGCNLEGFFATLGGEIALWSLVVLAIERYVVVCKPMSNFRFGENHAIMGVGFTWVMALACAAPPLVGWSRYIPEGMQCSCGIDYYTLKPEVNNESFVIYMFVVHFTIPMIVIFFCYGQLVFTVKEAAAQQQESATTQKAEKEVTRMVIIMVIAFLICWVPYASVAFYIFTHQGSNFGPIFMTLPAFFAKAASIYNPVIYIMMNKQFRTCMITTLCCGKNPLGDDEVSASASKTETSQVAPA.

Met-1 is subject to N-acetylmethionine. Residues 1–36 (MNGTEGPNFYVPFSNKTGVVRSPFEFPQYYLAEPWQ) are Extracellular-facing. N-linked (GlcNAc...) asparagine glycans are attached at residues Asn-2 and Asn-15. A helical membrane pass occupies residues 37–61 (FSMLAAYMFLLIVLGFPINFLTLYV). Residues 62–73 (TVQHKKLRTPLN) lie on the Cytoplasmic side of the membrane. The helical transmembrane segment at 74–96 (YILLNLAVADLFMVFGGFTTTLY) threads the bilayer. At 97–110 (TSLHGYFVFGPTGC) the chain is on the extracellular side. Cys-110 and Cys-187 are oxidised to a cystine. The chain crosses the membrane as a helical span at residues 111-133 (NLEGFFATLGGEIALWSLVVLAI). Residues 134–136 (ERY) carry the 'Ionic lock' involved in activated form stabilization motif. The Cytoplasmic segment spans residues 134–152 (ERYVVVCKPMSNFRFGENH). Residues 153-173 (AIMGVGFTWVMALACAAPPLV) form a helical membrane-spanning segment. Over 174-202 (GWSRYIPEGMQCSCGIDYYTLKPEVNNES) the chain is Extracellular. Residue Glu-201 coordinates Zn(2+). The helical transmembrane segment at 203–224 (FVIYMFVVHFTIPMIVIFFCYG) threads the bilayer. Residues 225-252 (QLVFTVKEAAAQQQESATTQKAEKEVTR) lie on the Cytoplasmic side of the membrane. The helical transmembrane segment at 253-274 (MVIIMVIAFLICWVPYASVAFY) threads the bilayer. Residues 275–286 (IFTHQGSNFGPI) are Extracellular-facing. A Zn(2+)-binding site is contributed by Gln-279. Residues 287–308 (FMTLPAFFAKAASIYNPVIYIM) traverse the membrane as a helical segment. Position 296 is an N6-(retinylidene)lysine (Lys-296). Over 309 to 348 (MNKQFRTCMITTLCCGKNPLGDDEVSASASKTETSQVAPA) the chain is Cytoplasmic. Residues Cys-322 and Cys-323 are each lipidated (S-palmitoyl cysteine). The interaction with SAG stretch occupies residues 330-348 (DDEVSASASKTETSQVAPA). 2 positions are modified to phosphoserine: Ser-334 and Ser-338. A phosphothreonine mark is found at Thr-340 and Thr-342. A Phosphoserine modification is found at Ser-343.

The protein belongs to the G-protein coupled receptor 1 family. Opsin subfamily. Homodimer. May form a complex composed of RHO, GRK1 and RCVRN in a Ca(2+)-dependent manner; RCVRN prevents the interaction between GRK1 and RHO. Interacts with GRK1. Interacts (phosphorylated form) with SAG. Interacts with GNAT1. Interacts with GNAT3. SAG and G-proteins compete for a common binding site. Interacts with PRCD; the interaction promotes PRCD stability. Forms a complex with ASAP1 and ARF4. Forms a complex with ASAP1, RAB11A, Rabin8/RAB3IP, ARF4 and RAB11FIP3; the complex regulates Golgi-to-cilia rhodopsin/RHO transport in photoreceptors. Phosphorylated on some or all of the serine and threonine residues present in the C-terminal region. Post-translationally, contains one covalently linked retinal chromophore. Upon light absorption, the covalently bound 11-cis-retinal is converted to all-trans-retinal. After hydrolysis of the Schiff base and release of the covalently bound all-trans-retinal, active rhodopsin is regenerated by binding of a fresh molecule of 11-cis-retinal.

It localises to the membrane. The protein resides in the cell projection. It is found in the cilium. The protein localises to the photoreceptor outer segment. In terms of biological role, photoreceptor required for image-forming vision at low light intensity. Required for photoreceptor cell viability after birth. Light-induced isomerization of 11-cis to all-trans retinal triggers a conformational change that activates signaling via G-proteins. Subsequent receptor phosphorylation mediates displacement of the bound G-protein alpha subunit by the arrestin SAG and terminates signaling. This is Rhodopsin (RHO) from Phoca vitulina (Harbor seal).